The primary structure comprises 458 residues: Riboflavin transporter 2 (458 aa).

5 helical membrane passes run 11-31 (LFGM…PLIV), 38-58 (WYLP…PLFV), 73-93 (PVIY…AFFW), 97-117 (VPLA…LLSV), and 146-166 (GVSG…VVHC). Residues N168, N176, N182, and N199 are each glycosylated (N-linked (GlcNAc...) asparagine). A helical membrane pass occupies residues 204–224 (VFFLFLSAMMVVCLAAFLLLN). A disordered region spans residues 249-274 (DQALSLSHRPQEEKPMISSPDSHRRA). 5 helical membrane passes run 279-299 (FGTG…LAWV), 325-345 (LAAT…MFLP), 349-369 (LVLI…IMAM), 388-408 (IVIA…IIGV), and 417-437 (ALVW…LSMF).

This sequence belongs to the riboflavin transporter family.

It localises to the cell membrane. It catalyses the reaction riboflavin(in) = riboflavin(out). In terms of biological role, plasma membrane transporter mediating the uptake by cells of the water soluble vitamin B2/riboflavin that plays a key role in biochemical oxidation-reduction reactions of the carbohydrate, lipid, and amino acid metabolism. In Salmo salar (Atlantic salmon), this protein is Riboflavin transporter 2 (rft2).